A 123-amino-acid chain; its full sequence is Preprofallaxidin-3 (123 aa).

The N-terminal stretch at 1 to 22 (MASLKKSLFLVLFLGLVSLSIC) is a signal peptide. The propeptide occupies 23-46 (EEKKRENEDDAEDENHEEESEEKR). A disordered region spans residues 26–46 (KRENEDDAEDENHEEESEEKR). The segment covering 30-42 (EDDAEDENHEEES) has biased composition (acidic residues). Leucine amide is present on Leu-62. Residues 66–70 (SEEKR) constitute a propeptide that is removed on maturation. Position 74 is a phenylalanine amide (Phe-74). Residues 78 to 82 (SEEKR) constitute a propeptide that is removed on maturation. Phenylalanine amide is present on Phe-88. The propeptide occupies 92–96 (SEEKR). Ile-102 is subject to Isoleucine amide. Residues 106–110 (SEEKR) constitute a propeptide that is removed on maturation. An Isoleucine amide modification is found at Ile-116. Positions 120–123 (KKKK) are excised as a propeptide.

This sequence belongs to the frog skin active peptide (FSAP) family. Brevinin subfamily. As to expression, expressed by the skin glands.

It is found in the secreted. Functionally, fallaxidin-1.1 shows no antibacterial activity against Gram-positive or Gram-negative bacteria. Does not inhibit the formation of NO by neuronal nitric oxide synthase. Has no effect on splenocyte proliferation or smooth muscle contraction. Fallaxidin-1.2 shows no antibacterial activity against Gram-positive or Gram-negative bacteria. Does not inhibit the formation of NO by neuronal nitric oxide synthase. Has no effect on splenocyte proliferation or smooth muscle contraction. In terms of biological role, fallaxidin-1.3 shows no antibacterial activity against Gram-positive or Gram-negative bacteria. Does not inhibit the formation of NO by neuronal nitric oxide synthase. Has no effect on splenocyte proliferation or smooth muscle contraction. Its function is as follows. Fallaxidin-3.2 shows antibacterial activity against the Gram-positive bacteria E.faecalis (MIC=100 uM) and L.lactis (MIC=500 uM). No antibacterial activity against the Gram-positive bacteria B.cereus, L.innocua, M.luteus, S.epidermidis, S.uberis and S.aureus, or the Gram-negative bacteria E.cloacae and E.coli. The protein is Preprofallaxidin-3 of Litoria fallax (Eastern dwarf tree frog).